Consider the following 638-residue polypeptide: Bifunctional protein glk (638 aa).

Residues 1–20 are disordered; sequence MSTGVQTKAAPGAGQHADGP. The tract at residues 1–341 is glucokinase; that stretch reads MSTGVQTKAA…QLSNRAGGSS (341 aa). 24–29 serves as a coordination point for ATP; that stretch reads ADIGGT. Residues 342–418 enclose the HTH rpiR-type domain; sequence SAVFERIRQM…LKLATGLTGT (77 aa). The interval 342–638 is putative HTH-type transcriptional regulator; the sequence is SAVFERIRQM…SHGAASSARD (297 aa). The segment at residues 378 to 397 is a DNA-binding region (H-T-H motif); that stretch reads IVDIARKADVSQPTVIRFCR. The SIS domain occupies 462-601; that stretch reads AIDLLNGARR…AVGVAIRRAV (140 aa).

This sequence in the N-terminal section; belongs to the bacterial glucokinase family.

The protein localises to the cytoplasm. It carries out the reaction D-glucose + ATP = D-glucose 6-phosphate + ADP + H(+). This is Bifunctional protein glk (glk) from Paraburkholderia xenovorans (strain LB400).